Reading from the N-terminus, the 958-residue chain is Unconventional myosin-Ih (958 aa).

One can recognise a Myosin motor domain in the interval 12–691 (GVQDFVLLDA…TLFATEDAFE (680 aa)). 105-112 (GESGAGKT) serves as a coordination point for ATP. The residue at position 365 (Ser-365) is a Phosphoserine. The tract at residues 568–590 (LSSLLEILISKEPSYIRCIKPNE) is actin-binding. 2 IQ domains span residues 694–716 (KHQLVSRIQATYKGCLGRREYMK) and 717–746 (KRQAATKLEAHWRGVLARKEIKRRRWAVQI). A TH1 domain is found at 773–955 (RKNYILNLRY…NGQLRVVSAG (183 aa)).

Belongs to the TRAFAC class myosin-kinesin ATPase superfamily. Myosin family. As to expression, highly expressed in the central nervous system, including the forebrain, midbrain and lower medulla. In the lower medulla, it is broadly expressed throughout the reticular formation. It is expressed in the retrotrapezoid nucleus and the nucleus of the solitary tract, as well as motor neurons of the facial, vagal and ambiguus nuclei. Expressed in neonatal inner-ear organs.

Functionally, myosins are actin-based motor molecules with ATPase activity. Unconventional myosins serve in intracellular movements. Their highly divergent tails are presumed to bind to membranous compartments, which would be moved relative to actin filaments. The sequence is that of Unconventional myosin-Ih (Myo1h) from Mus musculus (Mouse).